The following is a 528-amino-acid chain: MTPSVDNNLKQGYQYLFEHLEQSRQRAQPNLVLQEIGSVKSVSAGIAIVHGLPSAGFEELLRFPGDIYGIAFNIDEHDIGVIMLGDYSQLNAGDEVKRTGRVVDIPVGADLIGRVIDPLGRTLDGKGNLTSTQRMAIERPAPEIMTRSPVTEPLQTGLKVLDALIPIGKGQRELIMGDRQTGKTSIAIDAILNQKDKNVLCVYCAIGQKSASVAKILATLKHHNAFEYTVVMVTEGNDPPGLDYIAPYAATSIGEYFMEQGRDVLIVYDDLTQHARSYRELSLLLRRPPGREAFPGDIFYLHSRLLERSTHLNEAHGGGSMTALPIIETEEQNMSAYIPTNLISITDGQIYLSPDLFSLGILPAVDVGKSVSRVGGKAQRSAFRKVSGALKLAYAQFEELETFARFGARLDANSLQTIEHGQRIRSCLKQAESSPLSVAAQIVILLALTNDLFDAIDLAAMDSAQSAAIDGLTSLPLPIIEKLEQAESIEEQDQHIILDMLSQALKPFAQGTLRSGDKIQPTVNEANG.

An ATP-binding site is contributed by 177–184 (GDRQTGKT).

The protein belongs to the ATPase alpha/beta chains family. F-type ATPases have 2 components, CF(1) - the catalytic core - and CF(0) - the membrane proton channel. CF(1) has five subunits: alpha(3), beta(3), gamma(1), delta(1), epsilon(1). CF(0) has three main subunits: a(1), b(2) and c(9-12). The alpha and beta chains form an alternating ring which encloses part of the gamma chain. CF(1) is attached to CF(0) by a central stalk formed by the gamma and epsilon chains, while a peripheral stalk is formed by the delta and b chains.

The protein localises to the cell inner membrane. The catalysed reaction is ATP + H2O + 4 H(+)(in) = ADP + phosphate + 5 H(+)(out). Its function is as follows. Produces ATP from ADP in the presence of a proton gradient across the membrane. The alpha chain is a regulatory subunit. The chain is ATP synthase subunit alpha 1 from Pseudoalteromonas atlantica (strain T6c / ATCC BAA-1087).